Reading from the N-terminus, the 477-residue chain is UDP-N-acetylmuramate--L-alanine ligase (477 aa).

112–118 (GAHGKTT) provides a ligand contact to ATP.

The protein belongs to the MurCDEF family.

The protein localises to the cytoplasm. The enzyme catalyses UDP-N-acetyl-alpha-D-muramate + L-alanine + ATP = UDP-N-acetyl-alpha-D-muramoyl-L-alanine + ADP + phosphate + H(+). It functions in the pathway cell wall biogenesis; peptidoglycan biosynthesis. In terms of biological role, cell wall formation. The chain is UDP-N-acetylmuramate--L-alanine ligase from Delftia acidovorans (strain DSM 14801 / SPH-1).